A 283-amino-acid chain; its full sequence is Acetylglutamate kinase (283 aa).

Substrate is bound by residues 63–64, Arg85, and Asn178; that span reads GG.

This sequence belongs to the acetylglutamate kinase family. ArgB subfamily.

It localises to the plastid. Its subcellular location is the chloroplast. The catalysed reaction is N-acetyl-L-glutamate + ATP = N-acetyl-L-glutamyl 5-phosphate + ADP. It participates in amino-acid biosynthesis; L-arginine biosynthesis; N(2)-acetyl-L-ornithine from L-glutamate: step 2/4. Its function is as follows. Catalyzes the ATP-dependent phosphorylation of N-acetyl-L-glutamate. In Porphyra purpurea (Red seaweed), this protein is Acetylglutamate kinase.